The sequence spans 521 residues: Acidic amino acid decarboxylase GADL1 (521 aa).

N6-(pyridoxal phosphate)lysine is present on Lys333.

Belongs to the group II decarboxylase family. In terms of assembly, homodimer. It depends on pyridoxal 5'-phosphate as a cofactor. As to expression, expressed very weakly in neurons and not detected in astrocytes, brain or liver.

It carries out the reaction L-aspartate + H(+) = beta-alanine + CO2. It catalyses the reaction 3-sulfino-L-alanine + H(+) = hypotaurine + CO2. The enzyme catalyses L-cysteate + H(+) = taurine + CO2. May catalyze the decarboxylation of L-aspartate, 3-sulfino-L-alanine (cysteine sulfinic acid), and L-cysteate to beta-alanine, hypotaurine and taurine, respectively. Does not exhibit any decarboxylation activity toward glutamate. This chain is Acidic amino acid decarboxylase GADL1 (GADL1), found in Homo sapiens (Human).